The primary structure comprises 183 residues: Ribosome rescue factor SmrB (183 aa).

The Smr domain occupies 98–173 (LDLHGLTQLQ…GDAALLVLIE (76 aa)).

It belongs to the SmrB family. In terms of assembly, associates with collided ribosomes, but not with correctly translating polysomes.

Acts as a ribosome collision sensor. Detects stalled/collided disomes (pairs of ribosomes where the leading ribosome is stalled and a second ribosome has collided with it) and endonucleolytically cleaves mRNA at the 5' boundary of the stalled ribosome. Stalled/collided disomes form a new interface (primarily via the 30S subunits) that binds SmrB. Cleaved mRNA becomes available for tmRNA ligation, leading to ribosomal subunit dissociation and rescue of stalled ribosomes. The sequence is that of Ribosome rescue factor SmrB from Shigella sonnei (strain Ss046).